Consider the following 177-residue polypeptide: Peptidyl-tRNA hydrolase (177 aa).

TRNA is bound at residue tyrosine 18. Residue histidine 23 is the Proton acceptor of the active site. Positions 65, 67, and 113 each coordinate tRNA.

It belongs to the PTH family. Monomer.

The protein resides in the cytoplasm. It catalyses the reaction an N-acyl-L-alpha-aminoacyl-tRNA + H2O = an N-acyl-L-amino acid + a tRNA + H(+). In terms of biological role, hydrolyzes ribosome-free peptidyl-tRNAs (with 1 or more amino acids incorporated), which drop off the ribosome during protein synthesis, or as a result of ribosome stalling. Catalyzes the release of premature peptidyl moieties from peptidyl-tRNA molecules trapped in stalled 50S ribosomal subunits, and thus maintains levels of free tRNAs and 50S ribosomes. This chain is Peptidyl-tRNA hydrolase, found in Corynebacterium efficiens (strain DSM 44549 / YS-314 / AJ 12310 / JCM 11189 / NBRC 100395).